The chain runs to 150 residues: C-type lectin 16 (150 aa).

The N-terminal stretch at 1-27 (MKRVRVKVIFVSFGLLVVFLSLSGTAA) is a signal peptide. Disulfide bonds link cysteine 29/cysteine 40, cysteine 57/cysteine 146, and cysteine 123/cysteine 138. Residues 36 to 147 (YEGHCYKPFN…CRMLARFVCE (112 aa)) form the C-type lectin domain.

This sequence belongs to the snaclec family. As to quaternary structure, heteromultimer; disulfide-linked. In terms of tissue distribution, expressed by the venom gland.

It localises to the secreted. In terms of biological role, interferes with one step of hemostasis (modulation of platelet aggregation, or coagulation cascade, for example). The protein is C-type lectin 16 of Crotalus adamanteus (Eastern diamondback rattlesnake).